Reading from the N-terminus, the 268-residue chain is Tropinone reductase homolog (268 aa).

L21 to Y45 contributes to the NADP(+) binding site. S154 is a substrate binding site. Y167 functions as the Proton acceptor in the catalytic mechanism.

This sequence belongs to the short-chain dehydrogenases/reductases (SDR) family.

The chain is Tropinone reductase homolog from Datura stramonium (Jimsonweed).